The chain runs to 100 residues: uncharacterized protein (100 aa).

Over residues 65-91 the composition is skewed to basic and acidic residues; it reads DDRERHLSATGERRREQGFGTSRRKDP. The segment at 65-100 is disordered; the sequence is DDRERHLSATGERRREQGFGTSRRKDPSLYNWSDVK.

Belongs to the chlamydial CPn_0121/CT_031/TC_0300 family.

This is an uncharacterized protein from Chlamydia trachomatis serovar D (strain ATCC VR-885 / DSM 19411 / UW-3/Cx).